The following is a 163-amino-acid chain: Crossover junction endodeoxyribonuclease RuvC (163 aa).

Active-site residues include D7, E68, and H142. Positions 7, 68, and 142 each coordinate Mg(2+).

It belongs to the RuvC family. Homodimer which binds Holliday junction (HJ) DNA. The HJ becomes 2-fold symmetrical on binding to RuvC with unstacked arms; it has a different conformation from HJ DNA in complex with RuvA. In the full resolvosome a probable DNA-RuvA(4)-RuvB(12)-RuvC(2) complex forms which resolves the HJ. It depends on Mg(2+) as a cofactor.

Its subcellular location is the cytoplasm. It carries out the reaction Endonucleolytic cleavage at a junction such as a reciprocal single-stranded crossover between two homologous DNA duplexes (Holliday junction).. Its function is as follows. The RuvA-RuvB-RuvC complex processes Holliday junction (HJ) DNA during genetic recombination and DNA repair. Endonuclease that resolves HJ intermediates. Cleaves cruciform DNA by making single-stranded nicks across the HJ at symmetrical positions within the homologous arms, yielding a 5'-phosphate and a 3'-hydroxyl group; requires a central core of homology in the junction. The consensus cleavage sequence is 5'-(A/T)TT(C/G)-3'. Cleavage occurs on the 3'-side of the TT dinucleotide at the point of strand exchange. HJ branch migration catalyzed by RuvA-RuvB allows RuvC to scan DNA until it finds its consensus sequence, where it cleaves and resolves the cruciform DNA. This is Crossover junction endodeoxyribonuclease RuvC from Anaplasma phagocytophilum (strain HZ).